A 471-amino-acid chain; its full sequence is Meiosis-specific with OB domain-containing protein (471 aa).

Positions 167-272 form a DNA-binding region, OB; sequence IINVLAAVKS…EANILLNFIR (106 aa).

It belongs to the MEIOB family. As to quaternary structure, component of a multiprotein complex with RPA2 and SPATA22. Interacts with SPATA22. Interacts with the complex BRME1:HSF2BP:BRCA2.

It localises to the cytoplasm. It is found in the nucleus. The protein resides in the chromosome. Single-stranded DNA-binding protein required for homologous recombination in meiosis I. Required for double strand breaks (DSBs) repair and crossover formation and promotion of faithful and complete synapsis. Not required for the initial loading of recombinases but required to maintain a proper number of RAD51 and DMC1 foci after the zygotene stage. May act by ensuring the stabilization of recombinases, which is required for successful homology search and meiotic recombination. Displays Single-stranded DNA 3'-5' exonuclease activity in vitro. The protein is Meiosis-specific with OB domain-containing protein (MEIOB) of Macaca fascicularis (Crab-eating macaque).